Here is a 397-residue protein sequence, read N- to C-terminus: Serine protease MT3772 (397 aa).

4 consecutive transmembrane segments (helical) span residues I9–G29, L32–V52, L62–V82, and V102–P122. A disulfide bond links C214 and C395. Residue H235 is the Proton acceptor of the active site. Residue D264 is part of the active site. S343 (charge relay system) is an active-site residue.

This sequence belongs to the peptidase S1C family. As to quaternary structure, monomer.

The protein localises to the membrane. In terms of biological role, required for M.tuberculosis resistance to oxidative stress in addition to its role in resistance to acid, which is essential for virulence. This is Serine protease MT3772 from Mycobacterium tuberculosis (strain CDC 1551 / Oshkosh).